Consider the following 286-residue polypeptide: Shikimate dehydrogenase (NADP(+)) (286 aa).

Residues 21-23 (TLS) and threonine 68 contribute to the shikimate site. Lysine 72 (proton acceptor) is an active-site residue. Glutamate 84 serves as a coordination point for NADP(+). The shikimate site is built by asparagine 93 and aspartate 108. NADP(+) is bound by residues 132–136 (GNGGA) and leucine 230. Residue tyrosine 232 coordinates shikimate. Glycine 253 serves as a coordination point for NADP(+).

Belongs to the shikimate dehydrogenase family. As to quaternary structure, homodimer.

The enzyme catalyses shikimate + NADP(+) = 3-dehydroshikimate + NADPH + H(+). Its pathway is metabolic intermediate biosynthesis; chorismate biosynthesis; chorismate from D-erythrose 4-phosphate and phosphoenolpyruvate: step 4/7. In terms of biological role, involved in the biosynthesis of the chorismate, which leads to the biosynthesis of aromatic amino acids. Catalyzes the reversible NADPH linked reduction of 3-dehydroshikimate (DHSA) to yield shikimate (SA). This chain is Shikimate dehydrogenase (NADP(+)), found in Microcystis aeruginosa (strain NIES-843 / IAM M-2473).